We begin with the raw amino-acid sequence, 358 residues long: Tripartite motif-containing protein 54 (358 aa).

An RING-type zinc finger spans residues 26–82 (CPICLEMFSKPVVILPCQHNLCRKCANDVFQASNPLWQSRGSTTVSSGGRFRCPSCR). A B box-type zinc finger spans residues 121 to 163 (EQHLMCEEHEEEKINIYCLSCEVPTCSLCKVFGAHKDCEVAPL). 4 residues coordinate Zn(2+): cysteine 126, histidine 129, cysteine 149, and histidine 155. The interval 168–211 (KRQKSELSDGIAMLVAGNDRVQAVITQMEEVCQTIEDNSRRQKQ) is mediates microtubule-binding and homooligomerization. Residues 220–258 (LCAVLEERKGELLQALAREQEEKLQRVRGLIRQYGDHLE) are a coiled coil. Residues 271 to 329 (MEEPQMALYLQQAKELINKVGAMSKVELAGRPEPGYESMEQFTVRVEHVAEMLRTIDFQ) enclose the COS domain. A disordered region spans residues 326-358 (IDFQPGASGEEEEVAPDGEEGSAGPEEERPDGP). Acidic residues predominate over residues 334–345 (GEEEEVAPDGEE).

Homooligomer and heterooligomer. Interacts with tubulin. Interacts with TRIM63 and probably with TRIM55. As to expression, specifically expressed in heart and skeletal muscle.

The protein localises to the cytoplasm. It is found in the cytoskeleton. It localises to the myofibril. Its subcellular location is the sarcomere. The protein resides in the z line. May bind and stabilize microtubules during myotubes formation. The chain is Tripartite motif-containing protein 54 (TRIM54) from Homo sapiens (Human).